Reading from the N-terminus, the 582-residue chain is 2-succinyl-5-enolpyruvyl-6-hydroxy-3-cyclohexene-1-carboxylate synthase (582 aa).

Belongs to the TPP enzyme family. MenD subfamily. In terms of assembly, homodimer. Requires Mg(2+) as cofactor. It depends on Mn(2+) as a cofactor. The cofactor is thiamine diphosphate.

It catalyses the reaction isochorismate + 2-oxoglutarate + H(+) = 5-enolpyruvoyl-6-hydroxy-2-succinyl-cyclohex-3-ene-1-carboxylate + CO2. Its pathway is quinol/quinone metabolism; 1,4-dihydroxy-2-naphthoate biosynthesis; 1,4-dihydroxy-2-naphthoate from chorismate: step 2/7. It participates in cofactor biosynthesis; phylloquinone biosynthesis. Catalyzes the thiamine diphosphate-dependent decarboxylation of 2-oxoglutarate and the subsequent addition of the resulting succinic semialdehyde-thiamine pyrophosphate anion to isochorismate to yield 2-succinyl-5-enolpyruvyl-6-hydroxy-3-cyclohexene-1-carboxylate (SEPHCHC). The protein is 2-succinyl-5-enolpyruvyl-6-hydroxy-3-cyclohexene-1-carboxylate synthase of Synechococcus elongatus (strain ATCC 33912 / PCC 7942 / FACHB-805) (Anacystis nidulans R2).